The primary structure comprises 71 residues: Biotinylated protein TB7.3 homolog (71 aa).

In terms of domain architecture, Biotinyl-binding spans 2 to 71 (AEDVRAEIVA…QAGHLIAVID (70 aa)). Lysine 37 carries the N6-biotinyllysine modification.

This is Biotinylated protein TB7.3 homolog from Mycolicibacterium smegmatis (strain ATCC 700084 / mc(2)155) (Mycobacterium smegmatis).